The sequence spans 1200 residues: Chromosome partition protein Smc (1200 aa).

Pro33–Asn40 serves as a coordination point for ATP. The disordered stretch occupies residues Gly90–Ile109. The stretch at Glu202–Gln528 forms a coiled coil. The SMC hinge domain maps to Pro542 to Asn656. A coiled-coil region spans residues Thr692–Glu1046.

Belongs to the SMC family. Homodimer.

It localises to the cytoplasm. Its function is as follows. Required for chromosome condensation and partitioning. This Synechocystis sp. (strain ATCC 27184 / PCC 6803 / Kazusa) protein is Chromosome partition protein Smc.